Consider the following 428-residue polypeptide: Light-independent protochlorophyllide reductase subunit N (428 aa).

3 residues coordinate [4Fe-4S] cluster: C29, C54, and C115.

The protein belongs to the BchN/ChlN family. Protochlorophyllide reductase is composed of three subunits; BchL, BchN and BchB. Forms a heterotetramer of two BchB and two BchN subunits. It depends on [4Fe-4S] cluster as a cofactor.

The enzyme catalyses chlorophyllide a + oxidized 2[4Fe-4S]-[ferredoxin] + 2 ADP + 2 phosphate = protochlorophyllide a + reduced 2[4Fe-4S]-[ferredoxin] + 2 ATP + 2 H2O. The protein operates within porphyrin-containing compound metabolism; bacteriochlorophyll biosynthesis (light-independent). Its function is as follows. Component of the dark-operative protochlorophyllide reductase (DPOR) that uses Mg-ATP and reduced ferredoxin to reduce ring D of protochlorophyllide (Pchlide) to form chlorophyllide a (Chlide). This reaction is light-independent. The NB-protein (BchN-BchB) is the catalytic component of the complex. The protein is Light-independent protochlorophyllide reductase subunit N of Cereibacter sphaeroides (strain ATCC 17023 / DSM 158 / JCM 6121 / CCUG 31486 / LMG 2827 / NBRC 12203 / NCIMB 8253 / ATH 2.4.1.) (Rhodobacter sphaeroides).